A 400-amino-acid polypeptide reads, in one-letter code: PHD finger protein 24 (400 aa).

Gly2 is lipidated: N-myristoyl glycine. The segment at 30-108 (DRPSIRRTGE…FTPPAFIRPT (79 aa)) is disordered. Residue Arg36 is modified to Omega-N-methylarginine. Residue Ser43 is modified to Phosphoserine. Thr47 bears the Phosphothreonine mark. The residue at position 51 (Ser51) is a Phosphoserine. Basic and acidic residues predominate over residues 78-97 (AWERLRDGRGVEPEEFDRTG). The segment at 129–190 (NDEMCDVCEV…TGWSCHYCDN (62 aa)) adopts a PHD-type zinc-finger fold.

This chain is PHD finger protein 24, found in Pongo abelii (Sumatran orangutan).